The chain runs to 151 residues: Probable cGMP 3',5'-cyclic phosphodiesterase subunit delta (151 aa).

The protein belongs to the PDE6D/unc-119 family. Interacts with Pde6.

It is found in the nucleus. The protein resides in the cytoplasm. This is Probable cGMP 3',5'-cyclic phosphodiesterase subunit delta from Aedes aegypti (Yellowfever mosquito).